Here is a 214-residue protein sequence, read N- to C-terminus: MAKNKLNKNWLHDHINDPYVKLAQKEGYRARAVYKLKEIDETEKLIKPGQIIVDLGATPGSWSQYVRNKLSGSVGGGINGTIIGLDMLPMEPIADVHFIQGDFREQEVLEQLEQVLQGRKVDLVISDMAPNLSGIAVADAARMIDLIDLAIDFTQHHMKPSGSLLVKCFNGSGYSYIVEKFRDEFKTVVQKKPKASRDKSSEIFLLGKTLKNPL.

S-adenosyl-L-methionine-binding residues include G60, W62, D86, D102, and D127. The Proton acceptor role is filled by K167.

The protein belongs to the class I-like SAM-binding methyltransferase superfamily. RNA methyltransferase RlmE family.

The protein localises to the cytoplasm. It carries out the reaction uridine(2552) in 23S rRNA + S-adenosyl-L-methionine = 2'-O-methyluridine(2552) in 23S rRNA + S-adenosyl-L-homocysteine + H(+). Specifically methylates the uridine in position 2552 of 23S rRNA at the 2'-O position of the ribose in the fully assembled 50S ribosomal subunit. This chain is Ribosomal RNA large subunit methyltransferase E, found in Janthinobacterium sp. (strain Marseille) (Minibacterium massiliensis).